We begin with the raw amino-acid sequence, 751 residues long: Protein CLMP1 (751 aa).

Residues 1 to 11 (MGKSGGRKKKS) show a composition bias toward basic residues. The tract at residues 1-33 (MGKSGGRKKKSGGSNSNSSQVNSSETSGLSKPS) is disordered. Residues 12 to 28 (GGSNSNSSQVNSSETSG) are compositionally biased toward low complexity. 3 TPR repeats span residues 51–84 (AHEL…IPKS), 89–124 (AVFH…QPGF), and 125–158 (TRAL…DPNH). The 93-residue stretch at 290–382 (WRPLKFVYDH…GMLRLHVVDV (93 aa)) folds into the PB1 domain. The disordered stretch occupies residues 386 to 443 (QEPMLLEEEEEEVEEKPVIEEVISSPTESLSETEINTEKTDKEVEKEKASSSEDPETK). Acidic residues predominate over residues 390-399 (LLEEEEEEVE). Residues 409–419 (SSPTESLSETE) show a composition bias toward polar residues. Residues 421-443 (NTEKTDKEVEKEKASSSEDPETK) show a composition bias toward basic and acidic residues. TPR repeat units lie at residues 434 to 468 (ASSS…DPDA), 481 to 514 (SEAL…AFFN), and 536 to 570 (EVVA…KPDF). A compositionally biased stretch (basic and acidic residues) spans 630–648 (EQRMDDLKNPNSNKKEEVS). The interval 630–663 (EQRMDDLKNPNSNKKEEVSKRRKKQGGDGNEEVS) is disordered.

In terms of assembly, interacts with myosin XI-K. In terms of tissue distribution, expressed in roots, stems, leaves, apex, flowers and seeds. Detected throughout the petiole in juvenile and young leaves, but restricted to the petiole midvein in older leaves. Expressed in hydathodes, at the base of the trichome, in the vascular cylinder of primary root and lateral root, in emerging lateral root primordia, in pollen and in developing embryos, but not in mature embryos.

It is found in the cytoplasm. Required for plastid separation and partitioning during cell division. Not involved in plastid constriction or in the organization of cytoplasmic actin cables. Contributes to polar growth of root hairs. This is Protein CLMP1 from Arabidopsis thaliana (Mouse-ear cress).